The primary structure comprises 96 residues: RxLR effector protein PITG_11507 (96 aa).

An N-terminal signal peptide occupies residues 1-19; sequence MRLSFIIVAVSLLAGGSGA. The tract at residues 27-59 is disordered; that stretch reads SDVLTSRGTNEGARTGKRSLRYDSNVERTGEED. Positions 44 to 59 match the RxLR-dEER motif; that stretch reads RSLRYDSNVERTGEED. Residues 46–55 show a composition bias toward basic and acidic residues; it reads LRYDSNVERT.

Belongs to the RxLR effector family.

The protein localises to the secreted. It localises to the host nucleus. Its subcellular location is the host cytoplasm. Its function is as follows. Effector that enhances P.infestans colonization of Nicotiana benthamiana leaves. This is RxLR effector protein PITG_11507 from Phytophthora infestans (strain T30-4) (Potato late blight agent).